We begin with the raw amino-acid sequence, 628 residues long: Biosynthetic arginine decarboxylase (628 aa).

Lys99 is subject to N6-(pyridoxal phosphate)lysine. 279–289 (VDVGGGLGIDY) lines the substrate pocket.

It belongs to the Orn/Lys/Arg decarboxylase class-II family. SpeA subfamily. Requires Mg(2+) as cofactor. It depends on pyridoxal 5'-phosphate as a cofactor.

The enzyme catalyses L-arginine + H(+) = agmatine + CO2. Catalyzes the biosynthesis of agmatine from arginine. The sequence is that of Biosynthetic arginine decarboxylase from Xanthomonas axonopodis pv. citri (strain 306).